The chain runs to 410 residues: Peptidase T (410 aa).

Position 79 (His79) interacts with Zn(2+). The active site involves Asp81. Asp142 contributes to the Zn(2+) binding site. The active-site Proton acceptor is Glu176. Residues Glu177, Asp199, and His381 each coordinate Zn(2+).

It belongs to the peptidase M20B family. The cofactor is Zn(2+).

It localises to the cytoplasm. It carries out the reaction Release of the N-terminal residue from a tripeptide.. Its function is as follows. Cleaves the N-terminal amino acid of tripeptides. The sequence is that of Peptidase T from Listeria monocytogenes serotype 4b (strain F2365).